The primary structure comprises 364 residues: Guanine nucleotide-binding protein alpha-8 subunit (364 aa).

A lipid anchor (N-myristoyl glycine) is attached at Gly2. Cys5 carries S-palmitoyl cysteine lipidation. One can recognise a G-alpha domain in the interval 38–364; the sequence is KILKLLILGP…QHTMQKVGIQ (327 aa). The tract at residues 41–54 is G1 motif; that stretch reads KLLILGPGESGKST. GTP-binding positions include 46-53, 186-192, 211-215, 280-283, and Ala336; these read GPGESGKS, LKSRVPT, DVGGQ, and NKID. Residues Ser53 and Thr192 each contribute to the Mg(2+) site. Residues 184–192 form a G2 motif region; sequence DILKSRVPT. Residues 207 to 216 form a G3 motif region; the sequence is FRIFDVGGQR. The interval 276 to 283 is G4 motif; sequence ILFLNKID. The tract at residues 334-339 is G5 motif; that stretch reads TCATDT.

The protein belongs to the G-alpha family. In terms of assembly, g proteins are composed of 3 units; alpha, beta and gamma. The alpha chain contains the guanine nucleotide binding site.

Guanine nucleotide-binding proteins (G proteins) are involved as modulators or transducers in various transmembrane signaling systems. This Caenorhabditis elegans protein is Guanine nucleotide-binding protein alpha-8 subunit (gpa-8).